Here is a 258-residue protein sequence, read N- to C-terminus: Phosphate import ATP-binding protein PstB 3 (258 aa).

One can recognise an ABC transporter domain in the interval 10–253 (MTARSLAVHY…PANSLTQGYI (244 aa)). 42 to 49 (GPSGCGKS) contributes to the ATP binding site.

The protein belongs to the ABC transporter superfamily. Phosphate importer (TC 3.A.1.7) family. In terms of assembly, the complex is composed of two ATP-binding proteins (PstB), two transmembrane proteins (PstC and PstA) and a solute-binding protein (PstS).

Its subcellular location is the cell inner membrane. The enzyme catalyses phosphate(out) + ATP + H2O = ADP + 2 phosphate(in) + H(+). Its function is as follows. Part of the ABC transporter complex PstSACB involved in phosphate import. Responsible for energy coupling to the transport system. In Paramagnetospirillum magneticum (strain ATCC 700264 / AMB-1) (Magnetospirillum magneticum), this protein is Phosphate import ATP-binding protein PstB 3.